The chain runs to 159 residues: Ribosomal RNA large subunit methyltransferase H (159 aa).

An S-adenosyl-L-methionine-binding site is contributed by glycine 108.

Belongs to the RNA methyltransferase RlmH family. Homodimer.

It is found in the cytoplasm. The catalysed reaction is pseudouridine(1915) in 23S rRNA + S-adenosyl-L-methionine = N(3)-methylpseudouridine(1915) in 23S rRNA + S-adenosyl-L-homocysteine + H(+). Its function is as follows. Specifically methylates the pseudouridine at position 1915 (m3Psi1915) in 23S rRNA. The sequence is that of Ribosomal RNA large subunit methyltransferase H from Lactobacillus gasseri (strain ATCC 33323 / DSM 20243 / BCRC 14619 / CIP 102991 / JCM 1131 / KCTC 3163 / NCIMB 11718 / NCTC 13722 / AM63).